The primary structure comprises 351 residues: Penicillolysin (351 aa).

The signal sequence occupies residues 1–19 (MRFTTLSTAFLALAQNVYA). A propeptide spanning residues 20–174 (FPIESDLSAL…TKALKPLDRR (155 aa)) is cleaved from the precursor. N-linked (GlcNAc...) asparagine glycans are attached at residues asparagine 52 and asparagine 181. Residue histidine 302 coordinates Zn(2+). Glutamate 303 is a catalytic residue. Positions 306 and 317 each coordinate Zn(2+).

It belongs to the peptidase M35 family. Zn(2+) is required as a cofactor.

The enzyme catalyses Preferential cleavage of bonds with hydrophobic residues in P1'. Also 3-Asn-|-Gln-4 and 8-Gly-|-Ser-9 bonds in insulin B chain.. The chain is Penicillolysin (plnC) from Penicillium citrinum.